A 415-amino-acid chain; its full sequence is Sphingomyelin synthase-related protein 1 (415 aa).

The SAM domain occupies 12-78; the sequence is WTTKHVAVWL…MLSVRKLQKI (67 aa). A run of 4 helical transmembrane segments spans residues 153-173, 201-221, 232-252, and 277-297; these read ILSCIYVFIVFGFTSFIMVIV, FAMTEVCGMILCYIWLLVLLL, LCSLMGTVFLLRCFTMFVTSL, and FAIWSGFGMTLTGVHTCGDYM. Histidine 301 is a catalytic residue. Residues 322-342 form a helical membrane-spanning segment; it reads FLHTLSWVLNLFGIFFILAAH. Active-site residues include histidine 344 and aspartate 348. A helical transmembrane segment spans residues 347–367; it reads IDVFIAFYITTRLFLYYHTLA. Topologically, residues 368–415 are cytoplasmic; that stretch reads NTRAYQQSRRARIWFPMFSFFECNVNGTVPNEYCWPFSKPAIMKRLIG.

The protein belongs to the sphingomyelin synthase family.

It is found in the endoplasmic reticulum membrane. It carries out the reaction an N-acylsphing-4-enine + a 1,2-diacyl-sn-glycero-3-phosphoethanolamine = an N-acylsphing-4-enine 1-phosphoethanolamine + a 1,2-diacyl-sn-glycerol. The enzyme catalyses an N-acylsphinganine + a 1,2-diacyl-sn-glycero-3-phosphoethanolamine = an N-acylsphinganine-1-phosphoethanolamine + a 1,2-diacyl-sn-glycerol. It catalyses the reaction an N-acyl-(4R)-4-hydroxysphinganine + a 1,2-diacyl-sn-glycero-3-phosphoethanolamine = an N-acyl-(4R)-4-hydroxysphinganine-1-phosphoethanolamine + a 1,2-diacyl-sn-glycerol. The catalysed reaction is N-hexadecanoylsphinganine + a 1,2-diacyl-sn-glycero-3-phosphoethanolamine = N-hexadecanoyl-sphinganine-1-phosphoethanolamine + a 1,2-diacyl-sn-glycerol. It carries out the reaction N-hexadecanoyl-(4R)-hydroxysphinganine + a 1,2-diacyl-sn-glycero-3-phosphoethanolamine = N-hexadecanoyl-(4R)-hydroxysphinganine-1-phosphoethanolamine + a 1,2-diacyl-sn-glycerol. It participates in sphingolipid metabolism. In terms of biological role, synthesizes sphingolipids through transfer of a phosphatidyl head group from a glycerophospholipid on to the primary hydroxyl of a ceramide in the lumen of the endoplasmic reticulum. Catalyzes the synthesis of ceramide phosphoethanolamines (CPEs) (such as N-acylsphing-4-enine 1-phosphoethanolamine) by transferring phosphoethanolamine head group, which is smaller and more hydrophilic than the phosphocholine (PC) headgroup transferred in the canonical sphingomyelin synthesis (SMS) reaction by SMS1 or SMS2, from a phosphatidylethanolamine (1,2-diacyl-sn-glycero-3-phosphoethanolamine, PE) to a ceramide (such as N-acylsphing-4-enine). The larger PC prevents an efficient fit in the enzyme's catalytic pocket, leading to little or no SMS activity. In vitro, in the absence of ceramide, it has PLC activity with preference for phosphatidylinositol and phosphatidic acid, but also hydrolyzes phosphatidylethanolamine. The chain is Sphingomyelin synthase-related protein 1 from Homo sapiens (Human).